A 461-amino-acid polypeptide reads, in one-letter code: tRNA modification GTPase MnmE (461 aa).

Residues R20, E85, and K124 each contribute to the (6S)-5-formyl-5,6,7,8-tetrahydrofolate site. Positions 221–383 (GIPVAIIGET…LQQLLTEVSS (163 aa)) constitute a TrmE-type G domain. A K(+)-binding site is contributed by N231. GTP contacts are provided by residues 231–236 (NAGKST), 250–256 (SDIHGTT), and 275–278 (DTAG). S235 is a binding site for Mg(2+). The K(+) site is built by S250, I252, and T255. T256 is a Mg(2+) binding site. K461 is a binding site for (6S)-5-formyl-5,6,7,8-tetrahydrofolate.

It belongs to the TRAFAC class TrmE-Era-EngA-EngB-Septin-like GTPase superfamily. TrmE GTPase family. Homodimer. Heterotetramer of two MnmE and two MnmG subunits. The cofactor is K(+).

It localises to the cytoplasm. Exhibits a very high intrinsic GTPase hydrolysis rate. Involved in the addition of a carboxymethylaminomethyl (cmnm) group at the wobble position (U34) of certain tRNAs, forming tRNA-cmnm(5)s(2)U34. This chain is tRNA modification GTPase MnmE, found in Parabacteroides distasonis (strain ATCC 8503 / DSM 20701 / CIP 104284 / JCM 5825 / NCTC 11152).